We begin with the raw amino-acid sequence, 76 residues long: Conotoxin VnMEKL-0111 (76 aa).

Residues 1-18 (MKLTILFLVAAVLMSTQA) form the signal peptide. Residues 19–45 (LIQHDGEKSQKAKMKFLTARTLSAKTR) constitute a propeptide that is removed on maturation. 3 disulfides stabilise this stretch: Cys-49/Cys-65, Cys-56/Cys-70, and Cys-64/Cys-74.

This sequence belongs to the conotoxin O2 superfamily. In terms of tissue distribution, expressed by the venom duct.

It localises to the secreted. This chain is Conotoxin VnMEKL-0111, found in Conus ventricosus (Mediterranean cone).